Reading from the N-terminus, the 116-residue chain is MFSENLKKCRKQKKLTQQNMADKLGITRPAYTAYELGSREPDYKTLINISNILDVSLDYLLKGESNEKVFQDEAKKVLNDPETFLAAKDGEVTDEILQAALEIITEQLKERRKSDK.

An HTH cro/C1-type domain is found at 6 to 60; the sequence is LKKCRKQKKLTQQNMADKLGITRPAYTAYELGSREPDYKTLINISNILDVSLDYL. Positions 17–36 form a DNA-binding region, H-T-H motif; it reads QQNMADKLGITRPAYTAYEL.

This is an uncharacterized protein from Bacillus subtilis (strain 168).